An 89-amino-acid chain; its full sequence is Small ribosomal subunit protein uS15 (89 aa).

This sequence belongs to the universal ribosomal protein uS15 family. Part of the 30S ribosomal subunit. Forms a bridge to the 50S subunit in the 70S ribosome, contacting the 23S rRNA.

One of the primary rRNA binding proteins, it binds directly to 16S rRNA where it helps nucleate assembly of the platform of the 30S subunit by binding and bridging several RNA helices of the 16S rRNA. Functionally, forms an intersubunit bridge (bridge B4) with the 23S rRNA of the 50S subunit in the ribosome. The sequence is that of Small ribosomal subunit protein uS15 from Nostoc punctiforme (strain ATCC 29133 / PCC 73102).